We begin with the raw amino-acid sequence, 833 residues long: V-type proton ATPase 116 kDa subunit a 4 (833 aa).

The Cytoplasmic segment spans residues 1-390 (MASVFRSEEM…DAYGVGSYRE (390 aa)). A helical transmembrane segment spans residues 391 to 409 (INPAPYTIITFPFLFAVMF). The Vacuolar segment spans residues 410 to 411 (GD). A helical membrane pass occupies residues 412-428 (CGHGMVMLMAALWMVLN). The Cytoplasmic segment spans residues 429 to 443 (ERHLLAQKSTNEMWN). Residues 444 to 473 (IFFNGRYLILLMGIFSIYTGLIYNDCFSKS) form a helical membrane-spanning segment. Residues 474–538 (FNIFGSSWSV…ASNKLTFLNS (65 aa)) lie on the Vacuolar side of the membrane. A helical transmembrane segment spans residues 539–558 (YKMKMSVILGIAHMIFGVIL). The Cytoplasmic segment spans residues 559–576 (SLFNHIYFRRTLNIILQF). Residues 577 to 597 (IPEMIFMLSLFGYLVFMIIFK) form a helical membrane-spanning segment. The Vacuolar segment spans residues 598 to 642 (WCRYDAHTSRKAPSILIHFIGMFLFDYDDSSNAPLYGHQQEVQTF). A helical transmembrane segment spans residues 643-662 (FVIIALVSVPWMLLIKPFVL). The Cytoplasmic portion of the chain corresponds to 663–720 (RAKHQKSQLQSFTIHEDAVEGDHSGHSSKKTAGAHGMKDGHEEEFNFGDIFVHQAIHT). Residues 681–700 (VEGDHSGHSSKKTAGAHGMK) are disordered. Residues 721–745 (IEYCLGCISNTASYLRLWALSLAHA) traverse the membrane as a helical segment. Residues 746–766 (ELSEVLWTMVMSIGLRLQGWA) are Vacuolar-facing. A helical membrane pass occupies residues 767–805 (GLVGVFIIFAVFAVLTVAILLVMEGLSAFLHALRLHWVE). Residues 806-833 (FQNKFYEGAGSKFSPFSFKHVLEGTAEE) lie on the Cytoplasmic side of the membrane.

This sequence belongs to the V-ATPase 116 kDa subunit family. As to quaternary structure, V-ATPase is a heteromultimeric enzyme made up of two complexes: the ATP-hydrolytic V1 complex and the proton translocation V0 complex. The V1 complex consists of three catalytic AB heterodimers that form a heterohexamer, three peripheral stalks each consisting of EG heterodimers, one central rotor including subunits D and F, and the regulatory subunits C and H. The proton translocation complex V0 consists of the proton transport subunit a, a ring of proteolipid subunits c9c'', rotary subunit d, subunits e and f, and the accessory subunits ATP6AP1/Ac45 and ATP6AP2/PRR. Interacts with the V1 complex V-ATPase subunit A ATP6V1A. Interacts with the V0 complex V-ATPase subunit c ATP6V0C. As to expression, specifically expressed in kidney, but not in the heart, brain, spleen, lung, liver, muscle, or testis. Distribution within the kidney appears more widespread than that seen in man. High intensity staining at the surface of intercalated cells, with additional expression in the proximal tubule.

The protein localises to the apical cell membrane. It localises to the basolateral cell membrane. Functionally, subunit of the V0 complex of vacuolar(H+)-ATPase (V-ATPase), a multisubunit enzyme composed of a peripheral complex (V1) that hydrolyzes ATP and a membrane integral complex (V0) that translocates protons. V-ATPase is responsible for acidifying and maintaining the pH of intracellular compartments and in some cell types, is targeted to the plasma membrane, where it is responsible for acidifying the extracellular environment. Involved in normal vectorial acid transport into the urine by the kidney. The sequence is that of V-type proton ATPase 116 kDa subunit a 4 (Atp6v0a4) from Mus musculus (Mouse).